A 314-amino-acid chain; its full sequence is DNA-directed RNA polymerase subunit alpha (314 aa).

The segment at 1 to 228 (MIEIEKPKIE…EHLNIFVGLT (228 aa)) is alpha N-terminal domain (alpha-NTD). The tract at residues 245 to 314 (KEKVLEMTIE…ELGLGLRKDD (70 aa)) is alpha C-terminal domain (alpha-CTD).

Belongs to the RNA polymerase alpha chain family. As to quaternary structure, homodimer. The RNAP catalytic core consists of 2 alpha, 1 beta, 1 beta' and 1 omega subunit. When a sigma factor is associated with the core the holoenzyme is formed, which can initiate transcription.

The catalysed reaction is RNA(n) + a ribonucleoside 5'-triphosphate = RNA(n+1) + diphosphate. Its function is as follows. DNA-dependent RNA polymerase catalyzes the transcription of DNA into RNA using the four ribonucleoside triphosphates as substrates. The protein is DNA-directed RNA polymerase subunit alpha of Bacillus thuringiensis (strain Al Hakam).